We begin with the raw amino-acid sequence, 370 residues long: Glutamate 5-kinase (370 aa).

Lys17 provides a ligand contact to ATP. Positions 57, 144, and 156 each coordinate substrate. ATP contacts are provided by residues 176–177 (SD) and 220–226 (TGGMASK). Positions 282–360 (AGALTLDDGA…HELPVEMRRP (79 aa)) constitute a PUA domain.

The protein belongs to the glutamate 5-kinase family.

The protein localises to the cytoplasm. It carries out the reaction L-glutamate + ATP = L-glutamyl 5-phosphate + ADP. It participates in amino-acid biosynthesis; L-proline biosynthesis; L-glutamate 5-semialdehyde from L-glutamate: step 1/2. Catalyzes the transfer of a phosphate group to glutamate to form L-glutamate 5-phosphate. This Mycolicibacterium smegmatis (strain ATCC 700084 / mc(2)155) (Mycobacterium smegmatis) protein is Glutamate 5-kinase.